A 221-amino-acid polypeptide reads, in one-letter code: Thiamine-phosphate synthase (221 aa).

4-amino-2-methyl-5-(diphosphooxymethyl)pyrimidine is bound by residues 44–48 (QFREK) and Asn79. Residues Asp80 and Asp99 each coordinate Mg(2+). Ser117 is a binding site for 4-amino-2-methyl-5-(diphosphooxymethyl)pyrimidine. 143 to 145 (TSS) provides a ligand contact to 2-[(2R,5Z)-2-carboxy-4-methylthiazol-5(2H)-ylidene]ethyl phosphate. Lys146 lines the 4-amino-2-methyl-5-(diphosphooxymethyl)pyrimidine pocket. 2-[(2R,5Z)-2-carboxy-4-methylthiazol-5(2H)-ylidene]ethyl phosphate contacts are provided by residues Gly175 and 195–196 (IS).

It belongs to the thiamine-phosphate synthase family. The cofactor is Mg(2+).

It carries out the reaction 2-[(2R,5Z)-2-carboxy-4-methylthiazol-5(2H)-ylidene]ethyl phosphate + 4-amino-2-methyl-5-(diphosphooxymethyl)pyrimidine + 2 H(+) = thiamine phosphate + CO2 + diphosphate. The enzyme catalyses 2-(2-carboxy-4-methylthiazol-5-yl)ethyl phosphate + 4-amino-2-methyl-5-(diphosphooxymethyl)pyrimidine + 2 H(+) = thiamine phosphate + CO2 + diphosphate. The catalysed reaction is 4-methyl-5-(2-phosphooxyethyl)-thiazole + 4-amino-2-methyl-5-(diphosphooxymethyl)pyrimidine + H(+) = thiamine phosphate + diphosphate. The protein operates within cofactor biosynthesis; thiamine diphosphate biosynthesis; thiamine phosphate from 4-amino-2-methyl-5-diphosphomethylpyrimidine and 4-methyl-5-(2-phosphoethyl)-thiazole: step 1/1. In terms of biological role, condenses 4-methyl-5-(beta-hydroxyethyl)thiazole monophosphate (THZ-P) and 2-methyl-4-amino-5-hydroxymethyl pyrimidine pyrophosphate (HMP-PP) to form thiamine monophosphate (TMP). This chain is Thiamine-phosphate synthase, found in Geobacillus kaustophilus (strain HTA426).